The chain runs to 215 residues: Adenylate kinase (215 aa).

An ATP-binding site is contributed by 10–15 (GAGKGT). Residues 30 to 59 (STGDMLRAAIKAGTPLGLEAKKIIDEGGLV) form an NMP region. Residues threonine 31, arginine 36, 57-59 (GLV), 85-88 (GFPR), and glutamine 92 contribute to the AMP site. The tract at residues 122–159 (GRRVHLASGRTYHVTYNPPKVEGKDDVTGEDLIQRDDD) is LID. Residues arginine 123 and 132–133 (TY) contribute to the ATP site. AMP contacts are provided by arginine 156 and arginine 167. Glutamine 200 is a binding site for ATP.

The protein belongs to the adenylate kinase family. Monomer.

The protein resides in the cytoplasm. The catalysed reaction is AMP + ATP = 2 ADP. Its pathway is purine metabolism; AMP biosynthesis via salvage pathway; AMP from ADP: step 1/1. Functionally, catalyzes the reversible transfer of the terminal phosphate group between ATP and AMP. Plays an important role in cellular energy homeostasis and in adenine nucleotide metabolism. The sequence is that of Adenylate kinase from Neisseria meningitidis serogroup C (strain 053442).